The primary structure comprises 282 residues: V-set domain-containing T-cell activation inhibitor 1 (282 aa).

An N-terminal signal peptide occupies residues Met1–Ala24. Residues Leu25–Ser259 lie on the Extracellular side of the membrane. Ig-like V-type domains are found at residues His35–Lys146 and Pro153–Thr241. Intrachain disulfides connect Cys56/Cys130 and Cys168/Cys225. Asn216 is a glycosylation site (N-linked (GlcNAc...) asparagine). The helical transmembrane segment at Leu260–Met280 threads the bilayer. Over Leu281–Lys282 the chain is Cytoplasmic.

It belongs to the immunoglobulin superfamily. BTN/MOG family. Post-translationally, N-glycosylated. As to expression, overexpressed in breast, ovarian, endometrial, renal cell (RCC) and non-small-cell lung cancers (NSCLC). Expressed on activated T- and B-cells, monocytes and dendritic cells, but not expressed in most normal tissues (at protein level). Widely expressed, including in kidney, liver, lung, ovary, placenta, spleen and testis.

The protein resides in the cell membrane. Negatively regulates T-cell-mediated immune response by inhibiting T-cell activation, proliferation, cytokine production and development of cytotoxicity. When expressed on the cell surface of tumor macrophages, plays an important role, together with regulatory T-cells (Treg), in the suppression of tumor-associated antigen-specific T-cell immunity. Involved in promoting epithelial cell transformation. The protein is V-set domain-containing T-cell activation inhibitor 1 of Homo sapiens (Human).